Reading from the N-terminus, the 433-residue chain is MEKLIIQGGQPLVGDVHIEGAKNAVLPIMAAALLASKGPVELTNVPILSDVFMMQDVLKSLDARVKFDEQRNYLMIDANQPLNFEAAFEYVSKMRASIVVMGPLLARLGHARVAMPGGCAIGSRPVDLHLKGFEALGATITQSHGYIEAKADQLVGANIYLDFPSVGATQNIMMAATLAKGTTVIENVAREPEIVDLANVLNKMGAKVFGAGTEEIRIEGVTELKGTEHSIVQDRIEAGTFMIAAAATKGNVLVEEAISEHNKPLLSKLAEMGAQVIEEENGIRIIGPDELKPSNIKTLPYPGFPTDMQAQMTALQLMAHGTSVMTETVFENRFMHLEELRRMNADYQIEGQSVILYGPPELTGAEVAASDLRAAAALVIAGLVANGETLVTNLQYMDRGYYHFHQKLRALGAHISRADFDEAGHRKTTQKLA.

22–23 serves as a coordination point for phosphoenolpyruvate; it reads KN. Arg95 contacts UDP-N-acetyl-alpha-D-glucosamine. Catalysis depends on Cys119, which acts as the Proton donor. At Cys119 the chain carries 2-(S-cysteinyl)pyruvic acid O-phosphothioketal. UDP-N-acetyl-alpha-D-glucosamine contacts are provided by residues 124-128, Asp307, and Val329; that span reads RPVDL.

It belongs to the EPSP synthase family. MurA subfamily.

Its subcellular location is the cytoplasm. The enzyme catalyses phosphoenolpyruvate + UDP-N-acetyl-alpha-D-glucosamine = UDP-N-acetyl-3-O-(1-carboxyvinyl)-alpha-D-glucosamine + phosphate. The protein operates within cell wall biogenesis; peptidoglycan biosynthesis. In terms of biological role, cell wall formation. Adds enolpyruvyl to UDP-N-acetylglucosamine. This chain is UDP-N-acetylglucosamine 1-carboxyvinyltransferase 1, found in Latilactobacillus sakei subsp. sakei (strain 23K) (Lactobacillus sakei subsp. sakei).